The sequence spans 159 residues: S-ribosylhomocysteine lyase (159 aa).

Residues His53, His57, and Cys124 each contribute to the Fe cation site.

This sequence belongs to the LuxS family. In terms of assembly, homodimer. It depends on Fe cation as a cofactor.

The enzyme catalyses S-(5-deoxy-D-ribos-5-yl)-L-homocysteine = (S)-4,5-dihydroxypentane-2,3-dione + L-homocysteine. Its function is as follows. Involved in the synthesis of autoinducer 2 (AI-2) which is secreted by bacteria and is used to communicate both the cell density and the metabolic potential of the environment. The regulation of gene expression in response to changes in cell density is called quorum sensing. Catalyzes the transformation of S-ribosylhomocysteine (RHC) to homocysteine (HC) and 4,5-dihydroxy-2,3-pentadione (DPD). The polypeptide is S-ribosylhomocysteine lyase (Desulfotalea psychrophila (strain LSv54 / DSM 12343)).